The primary structure comprises 147 residues: Hemoglobin subunit gamma-1 (147 aa).

Glycine 2 is modified (N-acetylglycine; in form Hb F1). The region spanning 3–147 (HFTEEDKATI…VASALSSRYH (145 aa)) is the Globin domain. Threonine 13 carries the post-translational modification Phosphothreonine. Phosphoserine is present on residues serine 45, serine 51, and serine 53. Lysine 60 is modified (N6-acetyllysine). Heme b is bound at residue histidine 64. Lysine 83 is modified (N6-acetyllysine). Histidine 93 lines the heme b pocket. The residue at position 94 (cysteine 94) is an S-nitrosocysteine. Position 140 is a phosphoserine (serine 140).

Belongs to the globin family. In terms of assembly, heterotetramer of two alpha chains and two gamma chains in fetal hemoglobin (Hb F). In the case of deletions affecting one or more of the alpha chains, the excess gamma chains form homotetramers that exhibit neither Bohr effect nor heme-heme cooperativity (hemoglobin Bart's). Acetylation of Gly-2 converts Hb F to the minor Hb F1. As to expression, red blood cells.

Functionally, gamma chains make up the fetal hemoglobin F, in combination with alpha chains. The protein is Hemoglobin subunit gamma-1 (HBG1) of Homo sapiens (Human).